The primary structure comprises 299 residues: MSGTFLVDEINYQKQQISISDPENCMVKRLLTFNTSGSPFSYGFSFYYTFLTCPNEVVIPVWSLMSIPCLSNSTSSFFATSNLTFSKLLPPSCQIVKGLYVPVDVIYKDVITEEKGFSTVPWLGNVLLEWSSPNCRGCEKESLRCGFKNKASLEVKYLADPPDETKSRLRPLIITLCIIGGITATCIAAIRIYNSERFVNQRRQNAAITARNTTQQPRGVVVTTGLDQSTIESYKKVELGESRRLPGTNGIICPICLSEYASKETVRCMPECDHCFHVQCIDEWLKIHSSCPVCRNSRS.

Residues 172 to 192 traverse the membrane as a helical segment; sequence LIITLCIIGGITATCIAAIRI. The RING-type; atypical zinc finger occupies 253–295; sequence CPICLSEYASKETVRCMPECDHCFHVQCIDEWLKIHSSCPVCR.

This sequence belongs to the RING-type zinc finger family. ATL subfamily.

It localises to the membrane. The enzyme catalyses S-ubiquitinyl-[E2 ubiquitin-conjugating enzyme]-L-cysteine + [acceptor protein]-L-lysine = [E2 ubiquitin-conjugating enzyme]-L-cysteine + N(6)-ubiquitinyl-[acceptor protein]-L-lysine.. The protein operates within protein modification; protein ubiquitination. This is RING-H2 finger protein ATL20 (ATL20) from Arabidopsis thaliana (Mouse-ear cress).